A 68-amino-acid chain; its full sequence is Large ribosomal subunit protein uL29 (68 aa).

This sequence belongs to the universal ribosomal protein uL29 family.

This Limosilactobacillus reuteri (strain DSM 20016) (Lactobacillus reuteri) protein is Large ribosomal subunit protein uL29.